The chain runs to 165 residues: Ribosome maturation factor RimM (165 aa).

Positions 94 to 165 (EDEFYIADLN…YVVLNYQREI (72 aa)) constitute a PRC barrel domain.

It belongs to the RimM family. In terms of assembly, binds ribosomal protein uS19.

Its subcellular location is the cytoplasm. Functionally, an accessory protein needed during the final step in the assembly of 30S ribosomal subunit, possibly for assembly of the head region. Essential for efficient processing of 16S rRNA. May be needed both before and after RbfA during the maturation of 16S rRNA. It has affinity for free ribosomal 30S subunits but not for 70S ribosomes. The polypeptide is Ribosome maturation factor RimM (Rickettsia felis (strain ATCC VR-1525 / URRWXCal2) (Rickettsia azadi)).